A 147-amino-acid chain; its full sequence is Large ribosomal subunit protein uL15 (147 aa).

The segment at 1–45 (MRLEDLRPTPGAMKKRKRVGRGPGSGHGKTSGRGHKGQKARGSGK) is disordered. A compositionally biased stretch (basic residues) spans 30–44 (TSGRGHKGQKARGSG).

It belongs to the universal ribosomal protein uL15 family. Part of the 50S ribosomal subunit.

Functionally, binds to the 23S rRNA. This chain is Large ribosomal subunit protein uL15, found in Thermotoga sp. (strain RQ2).